A 164-amino-acid polypeptide reads, in one-letter code: MRNIYLVGFMGSGKSTVGKLLAEKLGFRFVDIDQEIEKEEGKKIKDIFREKGESYFRDLEKRMIERFLGSKNLVVSTGGGLGADSENMRKMKENGTVIWLDTPLETVFERCKGDDERPLLKKNRKEIKELFEKRKKIYAQADIRISTEGKSPYQIVNEILGRIR.

Position 11-16 (11-16 (GSGKST)) interacts with ATP. Serine 15 contributes to the Mg(2+) binding site. The substrate site is built by aspartate 33, arginine 57, and glycine 79. Arginine 117 provides a ligand contact to ATP. Residue arginine 134 coordinates substrate.

Belongs to the shikimate kinase family. In terms of assembly, monomer. Mg(2+) serves as cofactor.

It localises to the cytoplasm. It carries out the reaction shikimate + ATP = 3-phosphoshikimate + ADP + H(+). Its pathway is metabolic intermediate biosynthesis; chorismate biosynthesis; chorismate from D-erythrose 4-phosphate and phosphoenolpyruvate: step 5/7. Catalyzes the specific phosphorylation of the 3-hydroxyl group of shikimic acid using ATP as a cosubstrate. This chain is Shikimate kinase, found in Persephonella marina (strain DSM 14350 / EX-H1).